The chain runs to 160 residues: Cytochrome b6-f complex subunit 4 (160 aa).

The next 3 membrane-spanning stretches (helical) occupy residues 36-56 (ILYM…GLSI), 95-115 (LVGV…PFIE), and 127-147 (PIAT…GIGA).

This sequence belongs to the cytochrome b family. PetD subfamily. The 4 large subunits of the cytochrome b6-f complex are cytochrome b6, subunit IV (17 kDa polypeptide, petD), cytochrome f and the Rieske protein, while the 4 small subunits are petG, petL, petM and petN. The complex functions as a dimer.

Its subcellular location is the plastid. The protein localises to the chloroplast thylakoid membrane. Component of the cytochrome b6-f complex, which mediates electron transfer between photosystem II (PSII) and photosystem I (PSI), cyclic electron flow around PSI, and state transitions. In Gracilaria tenuistipitata var. liui (Red alga), this protein is Cytochrome b6-f complex subunit 4.